A 639-amino-acid chain; its full sequence is Polypeptide N-acetylgalactosaminyltransferase 15 (639 aa).

At M1–P11 the chain is on the cytoplasmic side. The helical; Signal-anchor for type II membrane protein transmembrane segment at C12 to H34 threads the bilayer. Residues P35–R639 are Lumenal-facing. The tract at residues R106–D155 is disordered. N107 carries an N-linked (GlcNAc...) asparagine glycan. Basic and acidic residues predominate over residues R124–G136. A compositionally biased stretch (acidic residues) spans A137 to L149. Disulfide bonds link C181–C412, C403–C482, C517–C536, C562–C575, and C603–C620. The segment at L190 to R299 is catalytic subdomain A. D231 and R260 together coordinate substrate. Residues D283, H285, and H417 each contribute to the Mn(2+) site. Residues P358–Q420 form a catalytic subdomain B region. A Ricin B-type lectin domain is found at S504 to D631. N-linked (GlcNAc...) asparagine glycosylation occurs at N574.

Belongs to the glycosyltransferase 2 family. GalNAc-T subfamily. Mn(2+) is required as a cofactor. As to expression, widely expressed. Highly expressed in small intestine, placenta, spleen, cerebral cortex and ovary. Expressed at intermediate level in uterus, mammary gland, stomach, cerebellum and whole brain. Weakly expressed in fetal brain, bone marrow, thyroid gland, thymus, heart, skeletal muscle, lung, liver, colon, pancreas, kidney and testis. Not expressed in leukocyte. Expressed in both normal and osteoarthritic cartilage. Expressed at low level in chondrocytes in all zones of both normal and osteoarthritic cartilage.

The protein resides in the golgi apparatus membrane. It carries out the reaction L-seryl-[protein] + UDP-N-acetyl-alpha-D-galactosamine = a 3-O-[N-acetyl-alpha-D-galactosaminyl]-L-seryl-[protein] + UDP + H(+). It catalyses the reaction L-threonyl-[protein] + UDP-N-acetyl-alpha-D-galactosamine = a 3-O-[N-acetyl-alpha-D-galactosaminyl]-L-threonyl-[protein] + UDP + H(+). It participates in protein modification; protein glycosylation. Catalyzes the initial reaction in O-linked oligosaccharide biosynthesis, the transfer of an N-acetyl-D-galactosamine residue to a serine or threonine residue on the protein receptor. Although it displays a much weaker activity toward all substrates tested compared to GALNT2, it is able to transfer up to seven GalNAc residues to the Muc5AC peptide, suggesting that it can fill vicinal Thr/Ser residues in cooperation with other GALNT proteins. Prefers Muc1a as substrate. In Homo sapiens (Human), this protein is Polypeptide N-acetylgalactosaminyltransferase 15 (GALNT15).